Here is a 284-residue protein sequence, read N- to C-terminus: Bifunctional protein FolD 2 (284 aa).

NADP(+) is bound by residues 164-166 (GRG), serine 189, and isoleucine 230.

The protein belongs to the tetrahydrofolate dehydrogenase/cyclohydrolase family. As to quaternary structure, homodimer.

It catalyses the reaction (6R)-5,10-methylene-5,6,7,8-tetrahydrofolate + NADP(+) = (6R)-5,10-methenyltetrahydrofolate + NADPH. It carries out the reaction (6R)-5,10-methenyltetrahydrofolate + H2O = (6R)-10-formyltetrahydrofolate + H(+). The protein operates within one-carbon metabolism; tetrahydrofolate interconversion. Its function is as follows. Catalyzes the oxidation of 5,10-methylenetetrahydrofolate to 5,10-methenyltetrahydrofolate and then the hydrolysis of 5,10-methenyltetrahydrofolate to 10-formyltetrahydrofolate. In Desulfitobacterium hafniense (strain Y51), this protein is Bifunctional protein FolD 2.